A 476-amino-acid polypeptide reads, in one-letter code: MNFKSTIGLEVHFELKTKSKIFSPSPVSYGAEANTETNVIDWAMPGVLPRLNKDVYRLGIMVALATHSHVLPVTHFDRKNYFYPDNPKAYQITQFFQPLARDGYIEIEVRGKKKRIGIHEMHIEEDAGKNTHGANGYSYVDLNRQGVPLLEVVSEPDMEDPEEAYAYLTKLRQIVQFTGASDVKMEEGSMRVDTNISIRPAGQEKLGTKVEMKNLNSFDHVRRSLAYEEKRQQQVLLSGGRVQLSTRRFDEATGKTVLERVKEGDADYRYFPEPDIAPYHIKQSWIDEIEESLPESPFERRKRYVEEYGIKEYDADVILQTKESSDFYDAAVAAGADPTLAANWLNTQVNGYLNENQVGIADIKLTPEHLAEMIKMIKDGTISSKIAKKVFKESIENGTDPKKYVEDKGMVQLSDVSVLGPMVTKVVDDNPQSVEDFKNGKDRAIGFLVGQIMKQTRGKANPKVVNQLLNKELQSR.

Belongs to the GatB/GatE family. GatB subfamily. As to quaternary structure, heterotrimer of A, B and C subunits.

It carries out the reaction L-glutamyl-tRNA(Gln) + L-glutamine + ATP + H2O = L-glutaminyl-tRNA(Gln) + L-glutamate + ADP + phosphate + H(+). The enzyme catalyses L-aspartyl-tRNA(Asn) + L-glutamine + ATP + H2O = L-asparaginyl-tRNA(Asn) + L-glutamate + ADP + phosphate + 2 H(+). Allows the formation of correctly charged Asn-tRNA(Asn) or Gln-tRNA(Gln) through the transamidation of misacylated Asp-tRNA(Asn) or Glu-tRNA(Gln) in organisms which lack either or both of asparaginyl-tRNA or glutaminyl-tRNA synthetases. The reaction takes place in the presence of glutamine and ATP through an activated phospho-Asp-tRNA(Asn) or phospho-Glu-tRNA(Gln). The protein is Aspartyl/glutamyl-tRNA(Asn/Gln) amidotransferase subunit B of Lactobacillus johnsonii (strain CNCM I-12250 / La1 / NCC 533).